We begin with the raw amino-acid sequence, 448 residues long: C4-dicarboxylate transport protein (448 aa).

Helical transmembrane passes span 9–29 (SLYF…HFYP), 59–79 (LIKM…IAGM), 91–111 (VALL…LLVI), 159–179 (AFAN…GFAL), 203–223 (IVNM…AFTI), 237–257 (LIIC…GTIS), 312–332 (GYSF…IFIA), 345–365 (ITLL…TGSG), and 367–387 (IVMA…LALI).

It belongs to the dicarboxylate/amino acid:cation symporter (DAACS) (TC 2.A.23) family.

Its subcellular location is the cell inner membrane. Responsible for the transport of dicarboxylates such as succinate, fumarate, and malate from the periplasm across the membrane. The sequence is that of C4-dicarboxylate transport protein from Acinetobacter baylyi (strain ATCC 33305 / BD413 / ADP1).